A 112-amino-acid chain; its full sequence is Thyroid transcription factor 1 (112 aa).

The homeobox DNA-binding region spans 1–60; it reads RRNRRVLFSQAQVYELERRFKQQKYLSAPEREHLASMIHLTPTQVKIWFQNHRYKMKRQA. The tract at residues 59–100 is disordered; it reads QAKDKAAQQQLQQDSGGGGGGGGAGCPQQQQAQQQSPRRVAV. Residues 73–83 show a composition bias toward gly residues; sequence SGGGGGGGGAG. Low complexity predominate over residues 84–93; that stretch reads CPQQQQAQQQ.

Belongs to the NK-2 homeobox family. Phosphorylated on serine residues.

The protein localises to the nucleus. Transcription factor that binds and activates the promoter of thyroid specific genes such as thyroglobulin, thyroperoxidase, and thyrotropin receptor. Crucial in the maintenance of the thyroid differentiation phenotype. May play a role in lung development and surfactant homeostasis. In Cavia porcellus (Guinea pig), this protein is Thyroid transcription factor 1 (TITF1).